The sequence spans 337 residues: G-protein coupled receptor 26 (337 aa).

Topologically, residues methionine 1 to glycine 10 are extracellular. Residues leucine 11–leucine 31 traverse the membrane as a helical segment. Residues histidine 32–asparagine 47 lie on the Cytoplasmic side of the membrane. A helical transmembrane segment spans residues leucine 48 to valine 68. The Extracellular portion of the chain corresponds to alanine 69–leucine 81. A disulfide bridge connects residues cysteine 79 and cysteine 156. Residues alanine 82 to isoleucine 102 traverse the membrane as a helical segment. Residues aspartate 103–alanine 123 lie on the Cytoplasmic side of the membrane. Residues alanine 124 to leucine 144 form a helical membrane-spanning segment. Topologically, residues serine 145–arginine 168 are extracellular. A helical membrane pass occupies residues phenylalanine 169–cysteine 189. At cysteine 190–threonine 245 the chain is on the cytoplasmic side. The chain crosses the membrane as a helical span at residues phenylalanine 246–phenylalanine 266. Residues serine 267–glycine 276 are Extracellular-facing. The chain crosses the membrane as a helical span at residues valine 277 to leucine 297. The Cytoplasmic portion of the chain corresponds to arginine 298–glutamate 337.

Belongs to the G-protein coupled receptor 1 family. As to expression, highly expressed in the CNS, the highest expression is seen in the amygdala, hippocampus and thalamus. Weak expression is detected in testis. Down-regulated in glioblastoma.

The protein localises to the cell membrane. Functionally, orphan receptor. Displays a significant level of constitutive activity. Its effect is mediated by G(s)-alpha protein that stimulate adenylate cyclase, resulting in an elevation of intracellular cAMP. The protein is G-protein coupled receptor 26 (GPR26) of Homo sapiens (Human).